The sequence spans 158 residues: Small ribosomal subunit protein uS17 (158 aa).

At alanine 2 the chain carries N-acetylalanine. Residue arginine 22 is modified to Citrulline. N6-acetyllysine occurs at positions 38, 45, and 58. Cysteine 60 is lipidated: S-palmitoyl cysteine. Residue serine 67 is modified to Phosphoserine. An Omega-N-methylarginine modification is found at arginine 69. Position 110 is a phosphoserine (serine 110).

It belongs to the universal ribosomal protein uS17 family. In terms of assembly, component of the small ribosomal subunit. Part of the small subunit (SSU) processome, composed of more than 70 proteins and the RNA chaperone small nucleolar RNA (snoRNA) U3. Citrullinated by PADI4.

The protein resides in the cytoplasm. The protein localises to the nucleus. Its subcellular location is the nucleolus. In terms of biological role, component of the small ribosomal subunit. The ribosome is a large ribonucleoprotein complex responsible for the synthesis of proteins in the cell. Part of the small subunit (SSU) processome, first precursor of the small eukaryotic ribosomal subunit. During the assembly of the SSU processome in the nucleolus, many ribosome biogenesis factors, an RNA chaperone and ribosomal proteins associate with the nascent pre-rRNA and work in concert to generate RNA folding, modifications, rearrangements and cleavage as well as targeted degradation of pre-ribosomal RNA by the RNA exosome. The chain is Small ribosomal subunit protein uS17 (RPS11) from Canis lupus familiaris (Dog).